A 277-amino-acid chain; its full sequence is NH(3)-dependent NAD(+) synthetase (277 aa).

46–53 (GISGGQDS) provides a ligand contact to ATP. Residue Asp-52 coordinates Mg(2+). Arg-142 contacts deamido-NAD(+). Thr-162 is an ATP binding site. Glu-167 lines the Mg(2+) pocket. The deamido-NAD(+) site is built by Lys-175 and Asp-182. Residues Lys-191 and Thr-213 each contribute to the ATP site. 263–264 (HK) is a deamido-NAD(+) binding site.

This sequence belongs to the NAD synthetase family. Homodimer.

The catalysed reaction is deamido-NAD(+) + NH4(+) + ATP = AMP + diphosphate + NAD(+) + H(+). The protein operates within cofactor biosynthesis; NAD(+) biosynthesis; NAD(+) from deamido-NAD(+) (ammonia route): step 1/1. In terms of biological role, catalyzes the ATP-dependent amidation of deamido-NAD to form NAD. Uses ammonia as a nitrogen source. The sequence is that of NH(3)-dependent NAD(+) synthetase from Corynebacterium glutamicum (strain ATCC 13032 / DSM 20300 / JCM 1318 / BCRC 11384 / CCUG 27702 / LMG 3730 / NBRC 12168 / NCIMB 10025 / NRRL B-2784 / 534).